The primary structure comprises 365 residues: Spore germination protein A2 (365 aa).

Transmembrane regions (helical) follow at residues 12–32 (TFQGISIVANTMLGAGLLTLP), 45–65 (WITLILEGFIFIFFIYLNTLI), 85–105 (WIGSIIGLLICGYFLGVASFE), 122–142 (PIQVIILTFICCGIYLMVGGL), 148–168 (LFPFYLTVTIIILLIVFGISF), 187–207 (IANSLTVVSISFLGMEVMLFL), 223–243 (LGFLIPIILYILTYIIVVGAL), 250–270 (TLIWPTISLFQSFELKGIFIE), 275–295 (FLLVVWIIQFFTTFVIYGYFA), 303–323 (FGLSTKTSMVIIGITVFYFSL), and 338–358 (LGYIFVSLFLLPFILFFIVAL).

The protein belongs to the amino acid-polyamine-organocation (APC) superfamily. Spore germination protein (SGP) (TC 2.A.3.9) family.

The protein resides in the cell membrane. Its function is as follows. Involved in the germinative response to L-alanine. Could be an amino acid transporter. Forms a complex at the inner spore membrane which acts as a receptor for L-alanine, thus is involved in the stimulation of germination in response to alanine. Can stimulate germination in the absence of gerD and gerK gene products (fructose and glucose receptors, respectively), but the response is improved in their presence. This is Spore germination protein A2 (gerAB) from Bacillus subtilis (strain 168).